We begin with the raw amino-acid sequence, 277 residues long: Large ribosomal subunit protein uL2 (277 aa).

Disordered regions lie at residues 24 to 55 and 221 to 277; these read ITTS…RHHG and RGSV…RKKK.

Belongs to the universal ribosomal protein uL2 family. In terms of assembly, part of the 50S ribosomal subunit. Forms a bridge to the 30S subunit in the 70S ribosome.

Its function is as follows. One of the primary rRNA binding proteins. Required for association of the 30S and 50S subunits to form the 70S ribosome, for tRNA binding and peptide bond formation. It has been suggested to have peptidyltransferase activity; this is somewhat controversial. Makes several contacts with the 16S rRNA in the 70S ribosome. The polypeptide is Large ribosomal subunit protein uL2 (Listeria innocua serovar 6a (strain ATCC BAA-680 / CLIP 11262)).